A 1351-amino-acid polypeptide reads, in one-letter code: Serine-rich adhesin for platelets (1351 aa).

An N-terminal signal peptide occupies residues 1–89 (MSKRQKEFHD…VNMLHDQQAF (89 aa)). The interval 90–230 (AASDAPLTSE…KTSTTSTSTA (141 aa)) is serine-rich repeat region 1, SRR1. Over residues 100–111 (LNTQSETVGNQN) the composition is skewed to polar residues. 2 disordered regions span residues 100–228 (LNTQ…TSTS) and 751–1323 (NSMS…GLLG). 2 stretches are compositionally biased toward low complexity: residues 112-133 (STTI…NSSS) and 149-228 (NVTS…TSTS). The non-repeat region (NRR) stretch occupies residues 231 to 751 (PIKLRTFSRL…TTFKYEVTRN (521 aa)). The span at 752–1294 (SMSDSVSTSG…SQSTLSATSE (543 aa)) shows a compositional bias: low complexity. The tract at residues 752–1312 (SMSDSVSTSG…AQSEKRLPDT (561 aa)) is serine-rich repeat region 1, SRR1. Residues 1309–1313 (LPDTG) carry the LPXTG sorting signal motif. Thr1312 is modified (pentaglycyl murein peptidoglycan amidated threonine). A propeptide spans 1313-1351 (GDSIKQNGLLGGVMTLLVGLGLMKRKKKKDENDQDDSQA) (removed by sortase).

It belongs to the serine-rich repeat protein (SRRP) family. Post-translationally, proteolytically cleaved by a metalloprotease. Glycosylated. It is probable that most of the Ser residues in SSR1 and SSR2 are O-GlcNAcylated. Sequential glycosylation by sugar transferases are able to generate complex sugar polymorphisms.

It localises to the secreted. The protein resides in the cell wall. Functionally, mediates binding to human platelets, possibly through a receptor-ligand interaction. Probably associated with virulence in endovascular infection. In Staphylococcus aureus (strain MRSA252), this protein is Serine-rich adhesin for platelets (sasA).